We begin with the raw amino-acid sequence, 123 residues long: UPF0102 protein PSHAa2523 (123 aa).

Belongs to the UPF0102 family.

The chain is UPF0102 protein PSHAa2523 from Pseudoalteromonas translucida (strain TAC 125).